Consider the following 379-residue polypeptide: DNA replication and repair protein RecF (379 aa).

34-41 is an ATP binding site; that stretch reads GDNGAGKT.

This sequence belongs to the RecF family.

The protein resides in the cytoplasm. Its function is as follows. The RecF protein is involved in DNA metabolism; it is required for DNA replication and normal SOS inducibility. RecF binds preferentially to single-stranded, linear DNA. It also seems to bind ATP. This chain is DNA replication and repair protein RecF, found in Mesorhizobium japonicum (strain LMG 29417 / CECT 9101 / MAFF 303099) (Mesorhizobium loti (strain MAFF 303099)).